A 20-amino-acid chain; its full sequence is Ribulose bisphosphate carboxylase small subunit (20 aa).

The protein belongs to the RuBisCO small chain family. Heterohexadecamer of 8 large and 8 small subunits.

It localises to the plastid. The protein localises to the chloroplast. Its function is as follows. RuBisCO catalyzes two reactions: the carboxylation of D-ribulose 1,5-bisphosphate, the primary event in carbon dioxide fixation, as well as the oxidative fragmentation of the pentose substrate in the photorespiration process. Both reactions occur simultaneously and in competition at the same active site. Although the small subunit is not catalytic it is essential for maximal activity. This chain is Ribulose bisphosphate carboxylase small subunit, found in Chattonella marina var. antiqua (Red tide flagellate).